Reading from the N-terminus, the 335-residue chain is Holliday junction branch migration complex subunit RuvB (335 aa).

The large ATPase domain (RuvB-L) stretch occupies residues 1–181 (MDRIVEIEKY…FGMQFRLEFY (181 aa)). ATP is bound by residues Leu20, Arg21, Gly62, Lys65, Thr66, Thr67, 128 to 130 (EDY), Arg171, Tyr181, and Arg218. Thr66 contributes to the Mg(2+) binding site. The interval 182–252 (KDSELALILQ…RANEALNSLG (71 aa)) is small ATPAse domain (RuvB-S). The segment at 255-335 (ELGFDAMDLR…LNYEKTLFEE (81 aa)) is head domain (RuvB-H). DNA-binding residues include Arg309 and Arg314.

It belongs to the RuvB family. In terms of assembly, homohexamer. Forms an RuvA(8)-RuvB(12)-Holliday junction (HJ) complex. HJ DNA is sandwiched between 2 RuvA tetramers; dsDNA enters through RuvA and exits via RuvB. An RuvB hexamer assembles on each DNA strand where it exits the tetramer. Each RuvB hexamer is contacted by two RuvA subunits (via domain III) on 2 adjacent RuvB subunits; this complex drives branch migration. In the full resolvosome a probable DNA-RuvA(4)-RuvB(12)-RuvC(2) complex forms which resolves the HJ.

It localises to the cytoplasm. It carries out the reaction ATP + H2O = ADP + phosphate + H(+). Its function is as follows. The RuvA-RuvB-RuvC complex processes Holliday junction (HJ) DNA during genetic recombination and DNA repair, while the RuvA-RuvB complex plays an important role in the rescue of blocked DNA replication forks via replication fork reversal (RFR). RuvA specifically binds to HJ cruciform DNA, conferring on it an open structure. The RuvB hexamer acts as an ATP-dependent pump, pulling dsDNA into and through the RuvAB complex. RuvB forms 2 homohexamers on either side of HJ DNA bound by 1 or 2 RuvA tetramers; 4 subunits per hexamer contact DNA at a time. Coordinated motions by a converter formed by DNA-disengaged RuvB subunits stimulates ATP hydrolysis and nucleotide exchange. Immobilization of the converter enables RuvB to convert the ATP-contained energy into a lever motion, pulling 2 nucleotides of DNA out of the RuvA tetramer per ATP hydrolyzed, thus driving DNA branch migration. The RuvB motors rotate together with the DNA substrate, which together with the progressing nucleotide cycle form the mechanistic basis for DNA recombination by continuous HJ branch migration. Branch migration allows RuvC to scan DNA until it finds its consensus sequence, where it cleaves and resolves cruciform DNA. This Campylobacter jejuni (strain RM1221) protein is Holliday junction branch migration complex subunit RuvB.